The primary structure comprises 359 residues: Decorin (359 aa).

The signal sequence occupies residues 1 to 16 (MKATIILLLLAQVSWA). Positions 17–30 (GPFQQRGLFDFMLE) are excised as a propeptide. The O-linked (Xyl...) (glycosaminoglycan) serine glycan is linked to Ser-34. Disulfide bonds link Cys-54–Cys-60 and Cys-58–Cys-67. 12 LRR repeats span residues 73–93 (DKVP…NNKI), 94–117 (TEIK…NNKI), 118–141 (SKVS…KNQL), 142–162 (KELP…ENEI), 163–186 (TKVR…TNPL), 187–212 (KSSG…DTNI), 213–233 (TSIP…GNKI), 234–257 (SRVD…FNSI), 258–281 (SAVD…NNKL), 282–304 (TRVP…NNNI), 305–334 (SVVG…SNPV), and 335–359 (QYWE…GNYK). A glycan (N-linked (GlcNAc...) asparagine) is linked at Asn-211. 2 N-linked (GlcNAc...) asparagine glycosylation sites follow: Asn-262 and Asn-303. A disulfide bridge links Cys-313 with Cys-346.

It belongs to the small leucine-rich proteoglycan (SLRP) family. SLRP class I subfamily. As to quaternary structure, binds to type I and type II collagen, fibronectin and TGF-beta. Forms a ternary complex with MFAP2 and ELN. Interacts with DPT. Post-translationally, the attached glycosaminoglycan chain can be either chondroitin sulfate or dermatan sulfate depending upon the tissue of origin. As to expression, detected in placenta (at protein level). Detected in cerebrospinal fluid, fibroblasts and urine (at protein level).

It is found in the secreted. The protein localises to the extracellular space. The protein resides in the extracellular matrix. In terms of biological role, may affect the rate of fibrils formation. The sequence is that of Decorin (DCN) from Homo sapiens (Human).